Reading from the N-terminus, the 547-residue chain is NADH-ubiquinone oxidoreductase chain 5 (547 aa).

15 helical membrane-spanning segments follow: residues 3-23 (ISIF…IFFV), 45-65 (YFNS…VLVF), 80-100 (YFML…SGCF), 101-121 (SMLV…LFYN), 132-152 (TVLT…STIF), 198-218 (ISSL…IMNF), 227-247 (VIMI…MAAL), 264-284 (MGFS…IHLL), 319-339 (VPYF…GLVF), 352-372 (FFFS…SVFL), 399-419 (VVMN…IWWM), 430-450 (FLYV…VVGF), 460-477 (FVYK…VYGL), 485-505 (LFLG…GFWS), and 512-532 (LYFN…WGCI).

This sequence belongs to the complex I subunit 5 family.

The protein resides in the mitochondrion inner membrane. The catalysed reaction is a ubiquinone + NADH + 5 H(+)(in) = a ubiquinol + NAD(+) + 4 H(+)(out). Core subunit of the mitochondrial membrane respiratory chain NADH dehydrogenase (Complex I) that is believed to belong to the minimal assembly required for catalysis. Complex I functions in the transfer of electrons from NADH to the respiratory chain. The immediate electron acceptor for the enzyme is believed to be ubiquinone. This chain is NADH-ubiquinone oxidoreductase chain 5 (ND5), found in Ascaris suum (Pig roundworm).